The following is a 193-amino-acid chain: Ion-translocating oxidoreductase complex subunit A (193 aa).

A run of 6 helical transmembrane segments spans residues 5-25 (LLLF…FLGL), 47-67 (FVMT…LVPL), 72-92 (LRTM…EMVV), 102-122 (LLGI…VALL), 134-154 (ALYG…FAAI), and 171-191 (AIAL…SGLV).

The protein belongs to the NqrDE/RnfAE family. The complex is composed of six subunits: RnfA, RnfB, RnfC, RnfD, RnfE and RnfG.

The protein resides in the cell inner membrane. Its function is as follows. Part of a membrane-bound complex that couples electron transfer with translocation of ions across the membrane. This Cronobacter sakazakii (strain ATCC BAA-894) (Enterobacter sakazakii) protein is Ion-translocating oxidoreductase complex subunit A.